The primary structure comprises 517 residues: Endoglucanase A (517 aa).

The signal sequence occupies residues 1–25; the sequence is MKRSLLKTCSIIAGATIIFSSLSIS. E185 serves as the catalytic Proton donor. E309 functions as the Nucleophile in the catalytic mechanism. A compositionally biased stretch (basic and acidic residues) spans 382–392; the sequence is HPEATEDDKPS. Positions 382 to 424 are disordered; it reads HPEATEDDKPSTDVTNPDSGNTKPDSGNTNPGTETTTPTDNEK. Over residues 393–407 the composition is skewed to polar residues; the sequence is TDVTNPDSGNTKPDS. Over residues 408 to 420 the composition is skewed to low complexity; that stretch reads GNTNPGTETTTPT. Residues 416–517 enclose the CBM2 domain; the sequence is TTTPTDNEKI…VISNFEYKFD (102 aa).

This sequence belongs to the glycosyl hydrolase 5 (cellulase A) family.

It catalyses the reaction Endohydrolysis of (1-&gt;4)-beta-D-glucosidic linkages in cellulose, lichenin and cereal beta-D-glucans.. In terms of biological role, hydrolyzes barley beta-glucan, lichenan, carboxymethylcellulose and xylan. It shows preferential activity against the larger cellooligosaccharides (cellohexaose and cellopentaose); cellotetraose is the smallest substrate degraded completely. The sequence is that of Endoglucanase A (celA) from Clostridium longisporum.